The following is a 586-amino-acid chain: Nucleus accumbens-associated protein 2 (586 aa).

Positions 30–94 (CDVSIVVKGQ…CYTGKLTMAA (65 aa)) constitute a BTB domain. A Glycyl lysine isopeptide (Lys-Gly) (interchain with G-Cter in SUMO2) cross-link involves residue lysine 171. Residues 177 to 196 (MPPASGPGLASKRPLETGPR) are disordered. Lysine 215 participates in a covalent cross-link: Glycyl lysine isopeptide (Lys-Gly) (interchain with G-Cter in SUMO2). The segment at 236 to 272 (QVPYPPGERTSPGASSLPTTDSPTSYHNEEDEEDDEA) is disordered. The segment covering 247 to 261 (PGASSLPTTDSPTSY) has biased composition (polar residues). Glycyl lysine isopeptide (Lys-Gly) (interchain with G-Cter in SUMO2) cross-links involve residues lysine 297, lysine 427, and lysine 454. In terms of domain architecture, BEN spans 349-446 (GSGVYITRGQ…DMCTNARRVR (98 aa)). The segment at 542–586 (APEQLPADGQSSPQAFEQGNTSSSRPQTPVATATRRPEGTYAGTL) is disordered. Residues 550–572 (GQSSPQAFEQGNTSSSRPQTPVA) are compositionally biased toward polar residues.

In terms of assembly, homooligomer; mediated by the BTB domain. Interacts with the NuRD complex. Interacts (via C-terminal part) with HDAC2. Interacts (via BTB domain) with MTA1, MTA2 and MTA3.

It localises to the nucleus. In terms of biological role, functions as a transcriptional repressor through its association with the NuRD complex. Recruits the NuRD complex to the promoter of MDM2, leading to the repression of MDM2 transcription and subsequent stability of p53/TP53. The protein is Nucleus accumbens-associated protein 2 (Nacc2) of Mus musculus (Mouse).